The following is a 443-amino-acid chain: Xaa-Pro dipeptidase (443 aa).

Mn(2+) contacts are provided by aspartate 246, aspartate 257, histidine 339, glutamate 384, and glutamate 423.

This sequence belongs to the peptidase M24B family. Bacterial-type prolidase subfamily. Mn(2+) is required as a cofactor.

It catalyses the reaction Xaa-L-Pro dipeptide + H2O = an L-alpha-amino acid + L-proline. Functionally, splits dipeptides with a prolyl residue in the C-terminal position. The polypeptide is Xaa-Pro dipeptidase (Klebsiella pneumoniae subsp. pneumoniae (strain ATCC 700721 / MGH 78578)).